We begin with the raw amino-acid sequence, 548 residues long: MSNKPFHYQAPFPLKKDDTEYYLLTSEHVSVSEFEGQEILKVAPEALTLLARQAFHDASFMLRPAHQQQVADILRDPEASENDKYVALQFLRNSDIAAKGVLPTCQDTGTAIIVGKKGQRVWTGGGDEAALARGVYNTYIEDNLRYSQNAPLDMYKEVNTGTNLPAQIDLYAVDGDEYKFLCIAKGGGSANKTYLYQETKALLTPGKLKNYLVEKMRTLGTAACPPYHIAFVIGGTSAETNLKTVKLASAKYYDELPTEGNEHGQAFRDVELEKELLIEAQNLGLGAQFGGKYFAHDIRVIRLPRHGASCPVGMGVSCSADRNIKAKINRQGIWIEKLEHNPGKYIPEELRKAGEGEAVRVDLNRPMKEILAQLSQYPVSTRLSLNGTIIVGRDIAHAKLKERMDNGEGLPQYIKDHPIYYAGPAKTPEGYASGSLGPTTAGRMDSYVDQLQAQGGSMIMLAKGNRSQQVTDACKKHGGFYLGSIGGPAAVLAQGSIKSLECVEYPELGMEAIWKIEVEDFPAFILVDDKGNDFFQQIQLTQCTRCVK.

Positions 105, 224, and 318 each coordinate [4Fe-4S] cluster.

This sequence belongs to the class-I fumarase family. As to quaternary structure, homodimer. The cofactor is [4Fe-4S] cluster.

The catalysed reaction is (S)-malate = fumarate + H2O. It carries out the reaction oxaloacetate = enol-oxaloacetate. The protein operates within carbohydrate metabolism; tricarboxylic acid cycle; (S)-malate from fumarate: step 1/1. Catalyzes the reversible hydration of fumarate to (S)-malate. Functions as an aerobic enzyme in the direction of malate formation as part of the citric acid cycle. Accounts for about 80% of the fumarase activity when the bacteria grow aerobically. To a lesser extent, also displays D-tartrate dehydratase activity in vitro, but is not able to convert (R)-malate, L-tartrate or meso-tartrate. Can also catalyze the isomerization of enol- to keto-oxaloacetate. The protein is Fumarate hydratase class I, aerobic of Escherichia coli O6:H1 (strain CFT073 / ATCC 700928 / UPEC).